Here is a 555-residue protein sequence, read N- to C-terminus: Glutamine--tRNA ligase (555 aa).

Residues Pro-34–His-44 carry the 'HIGH' region motif. ATP is bound by residues Glu-35–Asn-37 and His-41–Ser-47. Residues Asp-67 and Tyr-212 each coordinate L-glutamine. Residues Thr-231, Arg-261–Leu-262, and Met-269–Lys-271 each bind ATP. The 'KMSKS' region motif lies at Ile-268–Arg-272.

It belongs to the class-I aminoacyl-tRNA synthetase family. Monomer.

It localises to the cytoplasm. It catalyses the reaction tRNA(Gln) + L-glutamine + ATP = L-glutaminyl-tRNA(Gln) + AMP + diphosphate. The chain is Glutamine--tRNA ligase from Yersinia enterocolitica serotype O:8 / biotype 1B (strain NCTC 13174 / 8081).